The primary structure comprises 192 residues: UPF0312 protein PputW619_0484 (192 aa).

The first 23 residues, 1-23 (MLKKTFAALALGTALLSAGQAMA), serve as a signal peptide directing secretion.

The protein belongs to the UPF0312 family. Type 1 subfamily.

It localises to the periplasm. The polypeptide is UPF0312 protein PputW619_0484 (Pseudomonas putida (strain W619)).